Reading from the N-terminus, the 446-residue chain is Bifunctional protein GlmU (446 aa).

The tract at residues 1-226 is pyrophosphorylase; the sequence is MLAVAILAAG…PDEVNGINDR (226 aa). UDP-N-acetyl-alpha-D-glucosamine contacts are provided by residues 7–10, lysine 21, glutamine 73, and 78–79; these read LAAG and GT. Aspartate 103 lines the Mg(2+) pocket. UDP-N-acetyl-alpha-D-glucosamine is bound by residues glycine 140, glutamate 155, asparagine 170, and asparagine 224. Residue asparagine 224 participates in Mg(2+) binding. The linker stretch occupies residues 227–247; sequence CQLANCEALLQERLRNYWMKE. The segment at 248 to 446 is N-acetyltransferase; that stretch reads GVTFTDPASC…SKQLIKNGWQ (199 aa). Residues arginine 329 and lysine 347 each contribute to the UDP-N-acetyl-alpha-D-glucosamine site. The active-site Proton acceptor is the histidine 359. UDP-N-acetyl-alpha-D-glucosamine contacts are provided by tyrosine 362 and asparagine 373. Acetyl-CoA contacts are provided by residues alanine 376, 382 to 383, alanine 419, and arginine 436; that span reads NY.

This sequence in the N-terminal section; belongs to the N-acetylglucosamine-1-phosphate uridyltransferase family. In the C-terminal section; belongs to the transferase hexapeptide repeat family. In terms of assembly, homotrimer. Requires Mg(2+) as cofactor.

It localises to the cytoplasm. It carries out the reaction alpha-D-glucosamine 1-phosphate + acetyl-CoA = N-acetyl-alpha-D-glucosamine 1-phosphate + CoA + H(+). The catalysed reaction is N-acetyl-alpha-D-glucosamine 1-phosphate + UTP + H(+) = UDP-N-acetyl-alpha-D-glucosamine + diphosphate. The protein operates within nucleotide-sugar biosynthesis; UDP-N-acetyl-alpha-D-glucosamine biosynthesis; N-acetyl-alpha-D-glucosamine 1-phosphate from alpha-D-glucosamine 6-phosphate (route II): step 2/2. It functions in the pathway nucleotide-sugar biosynthesis; UDP-N-acetyl-alpha-D-glucosamine biosynthesis; UDP-N-acetyl-alpha-D-glucosamine from N-acetyl-alpha-D-glucosamine 1-phosphate: step 1/1. It participates in bacterial outer membrane biogenesis; LPS lipid A biosynthesis. In terms of biological role, catalyzes the last two sequential reactions in the de novo biosynthetic pathway for UDP-N-acetylglucosamine (UDP-GlcNAc). The C-terminal domain catalyzes the transfer of acetyl group from acetyl coenzyme A to glucosamine-1-phosphate (GlcN-1-P) to produce N-acetylglucosamine-1-phosphate (GlcNAc-1-P), which is converted into UDP-GlcNAc by the transfer of uridine 5-monophosphate (from uridine 5-triphosphate), a reaction catalyzed by the N-terminal domain. The protein is Bifunctional protein GlmU of Prochlorococcus marinus (strain MIT 9313).